We begin with the raw amino-acid sequence, 317 residues long: Glycine--tRNA ligase alpha subunit (317 aa).

It belongs to the class-II aminoacyl-tRNA synthetase family. In terms of assembly, tetramer of two alpha and two beta subunits.

Its subcellular location is the cytoplasm. It carries out the reaction tRNA(Gly) + glycine + ATP = glycyl-tRNA(Gly) + AMP + diphosphate. The sequence is that of Glycine--tRNA ligase alpha subunit from Pseudomonas fluorescens (strain ATCC BAA-477 / NRRL B-23932 / Pf-5).